The chain runs to 156 residues: Small ribosomal subunit protein uS7 (156 aa).

Belongs to the universal ribosomal protein uS7 family. As to quaternary structure, part of the 30S ribosomal subunit. Contacts proteins S9 and S11.

Its function is as follows. One of the primary rRNA binding proteins, it binds directly to 16S rRNA where it nucleates assembly of the head domain of the 30S subunit. Is located at the subunit interface close to the decoding center, probably blocks exit of the E-site tRNA. In Alkalilimnicola ehrlichii (strain ATCC BAA-1101 / DSM 17681 / MLHE-1), this protein is Small ribosomal subunit protein uS7.